We begin with the raw amino-acid sequence, 1479 residues long: WASH complex subunit 2 (1479 aa).

Over residues 1–17 the composition is skewed to low complexity; the sequence is MPEEQPQQQQQPVREQP. 5 disordered regions span residues 1 to 25, 188 to 210, 240 to 564, 576 to 1383, and 1419 to 1479; these read MPEEQPQQQQQPVREQPSNPDDVPW, GGLVEGGEQAGTDAQPSANTEKK, FIED…GGVK, FSGK…FDDI, and TSTT…NLFD. A compositionally biased stretch (acidic residues) spans 242-279; it reads EDSDSDSSDEEDEEDVDAEDGSDESSSESSSDDDDEKD. Residues 334-349 are compositionally biased toward low complexity; that stretch reads SKKSSNSYTSSLSDIL. Acidic residues predominate over residues 422–431; it reads DDDLFGDSEE. 2 stretches are compositionally biased toward low complexity: residues 465-475 and 514-532; these read TTTSSQPQQKK and TPKPKSTTTSAAPTATTTK. Phosphothreonine is present on T535. Residues 542–552 show a composition bias toward polar residues; the sequence is ASGSESTTGKS. The segment covering 595–620 has biased composition (basic and acidic residues); the sequence is TESKASEDDFFSSDKKSTSATKKDAE. Positions 709–723 are enriched in low complexity; that stretch reads PKAPTTATTTTTTKP. Over residues 765 to 781 the composition is skewed to basic and acidic residues; that stretch reads TETKKQPITEEPKKKQD. Over residues 802-814 the composition is skewed to polar residues; sequence ASISPASPVSTIE. Residues 839 to 885 are compositionally biased toward basic and acidic residues; that stretch reads DLTKDEPAKSEPTKVEPTKVEPTKAEPTKVEPAKVEPTKVESDKKES. A compositionally biased stretch (polar residues) spans 904 to 916; it reads KNPTTSSSTTATE. Low complexity predominate over residues 951-968; sequence SSTTKKSTTTTTTTTSSK. The segment covering 981–990 has biased composition (basic and acidic residues); that stretch reads KKVEEKKSSD. Composition is skewed to low complexity over residues 991–1000 and 1010–1021; these read FDSFFSGSDD and KTTTTPPLTSTT. A compositionally biased stretch (polar residues) spans 1062-1075; it reads PLTSNNTKNRTKSI. Over residues 1091-1107 the composition is skewed to basic and acidic residues; the sequence is EKNRSESPTSEKAEPTK. Residues 1108–1123 are compositionally biased toward polar residues; it reads KTSNISSLQNKLSLNP. Positions 1147-1162 are enriched in low complexity; that stretch reads STNNDNDSSATDLSDS. Composition is skewed to polar residues over residues 1163-1174 and 1220-1236; these read GRSSPSVTSPTL and KSGTSAPNRSESPTPTQ. Residue S1249 is modified to Phosphoserine. Residues 1277-1292 are compositionally biased toward low complexity; sequence EKTSSGKSSPSPTIKS. Positions 1307–1317 are enriched in polar residues; sequence ASTTTKPTASE. Basic and acidic residues predominate over residues 1327 to 1358; the sequence is KKSEPETPKETPKETPKEKEQTKEKEQPKETP. 2 stretches are compositionally biased toward low complexity: residues 1419–1445 and 1452–1466; these read TSTTSKSTTTTTTTTTTKAKSTKAVDN and NTTTKATPTKATPSK.

This sequence belongs to the FAM21 family. In terms of assembly, probable component of the WASH complex.

The chain is WASH complex subunit 2 from Dictyostelium discoideum (Social amoeba).